A 348-amino-acid chain; its full sequence is RNA 3'-terminal phosphate cyclase (348 aa).

ATP is bound by residues Q102 and 285-288 (HMGD). Residue H311 is the Tele-AMP-histidine intermediate of the active site.

Belongs to the RNA 3'-terminal cyclase family. Type 1 subfamily.

It localises to the cytoplasm. It carries out the reaction a 3'-end 3'-phospho-ribonucleotide-RNA + ATP = a 3'-end 2',3'-cyclophospho-ribonucleotide-RNA + AMP + diphosphate. In terms of biological role, catalyzes the conversion of 3'-phosphate to a 2',3'-cyclic phosphodiester at the end of RNA. The mechanism of action of the enzyme occurs in 3 steps: (A) adenylation of the enzyme by ATP; (B) transfer of adenylate to an RNA-N3'P to produce RNA-N3'PP5'A; (C) and attack of the adjacent 2'-hydroxyl on the 3'-phosphorus in the diester linkage to produce the cyclic end product. The biological role of this enzyme is unknown but it is likely to function in some aspects of cellular RNA processing. The chain is RNA 3'-terminal phosphate cyclase from Korarchaeum cryptofilum (strain OPF8).